Consider the following 397-residue polypeptide: UDP-GlcNAc:betaGal beta-1,3-N-acetylglucosaminyltransferase 7 (397 aa).

The Cytoplasmic portion of the chain corresponds to 1–6 (MSLWKK). A helical membrane pass occupies residues 7–26 (TLYKSVCLALALLVAVTVFQ). Over 27–397 (RSVTPGQFLQ…LTCSVKFQVL (371 aa)) the chain is Lumenal. Residues N84, N90, N210, and N387 are each glycosylated (N-linked (GlcNAc...) asparagine).

This sequence belongs to the glycosyltransferase 31 family. In terms of tissue distribution, strongly expressed in placenta and colon. Moderately expressed in lung, stomach, small intestine and kidney. Very weakly expressed in cerebrum, cerebellum, heart and testis.

The protein resides in the golgi apparatus membrane. The protein operates within protein modification; protein glycosylation. N-acetyl glucosamine (GlcNAc) transferase that catalyzes the transfer of GlcNAc via a beta1-&gt;3 linkage from UDP-GlcNAc to the non-reducing terminal galactose (Gal) in the linearly growing chain of N- and O-linked keratan sulfate proteoglycans. Cooperates with B4GALT4 galactosyltransferase and CHST6 and CHST1 sulfotransferases to construct and elongate mono- and disulfated disaccharide units [-&gt;3Galbeta1-&gt;4(6-sulfoGlcNAcbeta)1-&gt;] and [-&gt;3(6-sulfoGalbeta)1-&gt;4(6-sulfoGlcNAcbeta)1-&gt;] within keratan sulfate polymer. Involved in biosynthesis of N-linked keratan sulfate proteoglycans in cornea, with an impact on proteoglycan fibril organization and corneal transparency. May play a role in the maintenance of tissue architecture by suppressing cellular motility and invasion. This is UDP-GlcNAc:betaGal beta-1,3-N-acetylglucosaminyltransferase 7 (B3gnt7) from Mus musculus (Mouse).